We begin with the raw amino-acid sequence, 63 residues long: Large ribosomal subunit protein uL29 (63 aa).

This sequence belongs to the universal ribosomal protein uL29 family.

The protein is Large ribosomal subunit protein uL29 of Escherichia coli O8 (strain IAI1).